A 916-amino-acid chain; its full sequence is Translation initiation factor IF-2 (916 aa).

Residues 151–191 (NLDEQQRLAESDRARDEAIQRKRDEEQAAKDRVEAERKAAE) are compositionally biased toward basic and acidic residues. 2 disordered regions span residues 151–262 (NLDE…SHVM) and 280–328 (HLSA…ERPT). 2 stretches are compositionally biased toward low complexity: residues 192–243 (EAAA…ATPA) and 293–305 (RGKPTGRPGSSSS). Positions 415–584 (SRPPVVTIMG…SLQAEVLELK (170 aa)) constitute a tr-type G domain. A G1 region spans residues 424–431 (GHVDHGKT). 424-431 (GHVDHGKT) lines the GTP pocket. The interval 449 to 453 (GITQH) is G2. Positions 470–473 (DTPG) are G3. Residues 470–474 (DTPGH) and 524–527 (NKID) contribute to the GTP site. A G4 region spans residues 524–527 (NKID). The tract at residues 560-562 (SAK) is G5.

This sequence belongs to the TRAFAC class translation factor GTPase superfamily. Classic translation factor GTPase family. IF-2 subfamily.

The protein localises to the cytoplasm. One of the essential components for the initiation of protein synthesis. Protects formylmethionyl-tRNA from spontaneous hydrolysis and promotes its binding to the 30S ribosomal subunits. Also involved in the hydrolysis of GTP during the formation of the 70S ribosomal complex. This Xanthomonas campestris pv. campestris (strain ATCC 33913 / DSM 3586 / NCPPB 528 / LMG 568 / P 25) protein is Translation initiation factor IF-2.